Here is a 135-residue protein sequence, read N- to C-terminus: S-adenosylmethionine decarboxylase proenzyme (135 aa).

Serine 63 functions as the Schiff-base intermediate with substrate; via pyruvic acid in the catalytic mechanism. Pyruvic acid (Ser); by autocatalysis is present on serine 63. Residue histidine 68 is the Proton acceptor; for processing activity of the active site. Cysteine 83 (proton donor; for catalytic activity) is an active-site residue.

Belongs to the prokaryotic AdoMetDC family. Type 1 subfamily. As to quaternary structure, heterotetramer of two alpha and two beta chains arranged as a dimer of alpha/beta heterodimers. The cofactor is pyruvate. Is synthesized initially as an inactive proenzyme. Formation of the active enzyme involves a self-maturation process in which the active site pyruvoyl group is generated from an internal serine residue via an autocatalytic post-translational modification. Two non-identical subunits are generated from the proenzyme in this reaction, and the pyruvate is formed at the N-terminus of the alpha chain, which is derived from the carboxyl end of the proenzyme. The post-translation cleavage follows an unusual pathway, termed non-hydrolytic serinolysis, in which the side chain hydroxyl group of the serine supplies its oxygen atom to form the C-terminus of the beta chain, while the remainder of the serine residue undergoes an oxidative deamination to produce ammonia and the pyruvoyl group blocking the N-terminus of the alpha chain.

The enzyme catalyses S-adenosyl-L-methionine + H(+) = S-adenosyl 3-(methylsulfanyl)propylamine + CO2. It participates in amine and polyamine biosynthesis; S-adenosylmethioninamine biosynthesis; S-adenosylmethioninamine from S-adenosyl-L-methionine: step 1/1. Functionally, catalyzes the decarboxylation of S-adenosylmethionine to S-adenosylmethioninamine (dcAdoMet), the propylamine donor required for the synthesis of the polyamines spermine and spermidine from the diamine putrescine. The chain is S-adenosylmethionine decarboxylase proenzyme from Thermodesulfovibrio yellowstonii (strain ATCC 51303 / DSM 11347 / YP87).